A 308-amino-acid chain; its full sequence is Ribosomal RNA large subunit methyltransferase F (308 aa).

This sequence belongs to the methyltransferase superfamily. METTL16/RlmF family.

Its subcellular location is the cytoplasm. It catalyses the reaction adenosine(1618) in 23S rRNA + S-adenosyl-L-methionine = N(6)-methyladenosine(1618) in 23S rRNA + S-adenosyl-L-homocysteine + H(+). In terms of biological role, specifically methylates the adenine in position 1618 of 23S rRNA. This chain is Ribosomal RNA large subunit methyltransferase F, found in Escherichia coli O127:H6 (strain E2348/69 / EPEC).